An 82-amino-acid chain; its full sequence is RNA-binding protein GK0100 (82 aa).

Belongs to the eukaryotic ribosomal protein eL8 family.

This is RNA-binding protein GK0100 from Geobacillus kaustophilus (strain HTA426).